The following is a 38-amino-acid chain: ADCVGDGQRCADWAGPYCCSGYYCSCRSMPYCRCRSDS.

Intrachain disulfides connect cysteine 3–cysteine 19, cysteine 10–cysteine 24, cysteine 18–cysteine 34, and cysteine 26–cysteine 32. A Serine amide modification is found at serine 38.

Belongs to the neurotoxin 07 (Beta/delta-agtx) family. 02 (aga-3) subfamily. As to expression, expressed by the venom gland.

Its subcellular location is the secreted. Functionally, insecticidal neurotoxin that induces irreversible neuromuscular blockade in house crickets (A.domesticus). Modifies presynaptic voltage-gated sodium channels (Nav), causing them to open at the normal resting potential of the nerve. This leads to spontaneous release of neurotransmitter and repetitive action potentials in motor neurons. The polypeptide is Mu-agatoxin-Hc1b (Hololena curta (Funnel-web spider)).